Here is a 233-residue protein sequence, read N- to C-terminus: Large ribosomal subunit protein uL3 (233 aa).

It belongs to the universal ribosomal protein uL3 family. As to quaternary structure, part of the 50S ribosomal subunit. Forms a cluster with proteins L14 and L19.

Its function is as follows. One of the primary rRNA binding proteins, it binds directly near the 3'-end of the 23S rRNA, where it nucleates assembly of the 50S subunit. The sequence is that of Large ribosomal subunit protein uL3 from Ureaplasma urealyticum serovar 10 (strain ATCC 33699 / Western).